Here is a 301-residue protein sequence, read N- to C-terminus: Oxygen-dependent coproporphyrinogen-III oxidase (301 aa).

Serine 90 provides a ligand contact to substrate. A divalent metal cation-binding residues include histidine 94 and histidine 104. Histidine 104 (proton donor) is an active-site residue. 106-108 provides a ligand contact to substrate; that stretch reads NVR. The a divalent metal cation site is built by histidine 143 and histidine 173. Residues 238–273 form an important for dimerization region; it reads YVEFNLVWDRGTLFGLQSGGRTESILMSLPPVVKWR. 256–258 contacts substrate; it reads GGR.

The protein belongs to the aerobic coproporphyrinogen-III oxidase family. Homodimer. The cofactor is a divalent metal cation.

It is found in the cytoplasm. The enzyme catalyses coproporphyrinogen III + O2 + 2 H(+) = protoporphyrinogen IX + 2 CO2 + 2 H2O. It participates in porphyrin-containing compound metabolism; protoporphyrin-IX biosynthesis; protoporphyrinogen-IX from coproporphyrinogen-III (O2 route): step 1/1. Involved in the heme biosynthesis. Catalyzes the aerobic oxidative decarboxylation of propionate groups of rings A and B of coproporphyrinogen-III to yield the vinyl groups in protoporphyrinogen-IX. This Nitrosomonas europaea (strain ATCC 19718 / CIP 103999 / KCTC 2705 / NBRC 14298) protein is Oxygen-dependent coproporphyrinogen-III oxidase.